An 858-amino-acid chain; its full sequence is Bifunctional uridylyltransferase/uridylyl-removing enzyme (858 aa).

A uridylyltransferase region spans residues 1–324; the sequence is MSASVAEPPP…PATSGVTRVL (324 aa). Residues 325–681 are uridylyl-removing; it reads SPGRFVEKQG…ARPSPVGDAL (357 aa). One can recognise an HD domain in the interval 443 to 565; that stretch reads VDQHILMVLR…VGSERRLTAL (123 aa). 2 ACT domains span residues 682–761 and 790–858; these read QVLV…PEPS and ILSV…AIAV.

Belongs to the GlnD family. Mg(2+) serves as cofactor.

It catalyses the reaction [protein-PII]-L-tyrosine + UTP = [protein-PII]-uridylyl-L-tyrosine + diphosphate. The catalysed reaction is [protein-PII]-uridylyl-L-tyrosine + H2O = [protein-PII]-L-tyrosine + UMP + H(+). Uridylyltransferase (UTase) activity is inhibited by glutamine, while glutamine activates uridylyl-removing (UR) activity. Its function is as follows. Modifies, by uridylylation and deuridylylation, the PII regulatory proteins (GlnB and homologs), in response to the nitrogen status of the cell that GlnD senses through the glutamine level. Under low glutamine levels, catalyzes the conversion of the PII proteins and UTP to PII-UMP and PPi, while under higher glutamine levels, GlnD hydrolyzes PII-UMP to PII and UMP (deuridylylation). Thus, controls uridylylation state and activity of the PII proteins, and plays an important role in the regulation of nitrogen assimilation and metabolism. This Burkholderia mallei (strain ATCC 23344) protein is Bifunctional uridylyltransferase/uridylyl-removing enzyme.